We begin with the raw amino-acid sequence, 382 residues long: Succinate--CoA ligase [ADP-forming] subunit beta (382 aa).

Residues lysine 46, glycine 53–glycine 55, valine 95, and glutamate 100 contribute to the ATP site. Residues asparagine 192 and aspartate 206 each contribute to the Mg(2+) site. Residues asparagine 257 and glycine 314–threonine 316 each bind substrate.

This sequence belongs to the succinate/malate CoA ligase beta subunit family. As to quaternary structure, heterotetramer of two alpha and two beta subunits. It depends on Mg(2+) as a cofactor.

The catalysed reaction is succinate + ATP + CoA = succinyl-CoA + ADP + phosphate. It catalyses the reaction GTP + succinate + CoA = succinyl-CoA + GDP + phosphate. Its pathway is carbohydrate metabolism; tricarboxylic acid cycle; succinate from succinyl-CoA (ligase route): step 1/1. In terms of biological role, succinyl-CoA synthetase functions in the citric acid cycle (TCA), coupling the hydrolysis of succinyl-CoA to the synthesis of either ATP or GTP and thus represents the only step of substrate-level phosphorylation in the TCA. The beta subunit provides nucleotide specificity of the enzyme and binds the substrate succinate, while the binding sites for coenzyme A and phosphate are found in the alpha subunit. The sequence is that of Succinate--CoA ligase [ADP-forming] subunit beta from Bacteroides fragilis (strain ATCC 25285 / DSM 2151 / CCUG 4856 / JCM 11019 / LMG 10263 / NCTC 9343 / Onslow / VPI 2553 / EN-2).